We begin with the raw amino-acid sequence, 137 residues long: Nucleoside diphosphate kinase (137 aa).

Residues Lys9, Phe57, Arg85, Thr91, Arg102, and Asn112 each coordinate ATP. Catalysis depends on His115, which acts as the Pros-phosphohistidine intermediate.

It belongs to the NDK family. In terms of assembly, homotetramer. Requires Mg(2+) as cofactor.

The protein resides in the cytoplasm. It catalyses the reaction a 2'-deoxyribonucleoside 5'-diphosphate + ATP = a 2'-deoxyribonucleoside 5'-triphosphate + ADP. It carries out the reaction a ribonucleoside 5'-diphosphate + ATP = a ribonucleoside 5'-triphosphate + ADP. Its function is as follows. Major role in the synthesis of nucleoside triphosphates other than ATP. The ATP gamma phosphate is transferred to the NDP beta phosphate via a ping-pong mechanism, using a phosphorylated active-site intermediate. The sequence is that of Nucleoside diphosphate kinase from Leptospira interrogans serogroup Icterohaemorrhagiae serovar Lai (strain 56601).